Here is an 80-residue protein sequence, read N- to C-terminus: Serine palmitoyltransferase-regulating protein TSC3 (80 aa).

A helical membrane pass occupies residues 54 to 74 (FDSFFLHVFFLTIFSLSFFGI).

As to quaternary structure, interacts with the serine palmitoyltransferase complex LCB1-LCB2. Component of the SPOTS complex, at least composed of LCB1/2 (LCB1 and/or LCB2), ORM1/2 (ORM1 and/or ORM2), SAC1 and TSC3.

The protein localises to the endoplasmic reticulum membrane. Stimulates the activity of serine palmitoyltransferase (SPT), and thus plays a role in the biosynthesis of sphingolipids. This Saccharomyces cerevisiae (strain ATCC 204508 / S288c) (Baker's yeast) protein is Serine palmitoyltransferase-regulating protein TSC3 (TSC3).